The primary structure comprises 198 residues: dITP/XTP pyrophosphatase (198 aa).

7–12 (THNPHK) serves as a coordination point for substrate. Positions 40 and 69 each coordinate Mg(2+). Catalysis depends on D69, which acts as the Proton acceptor. Residues T70, 151 to 154 (FGYD), K174, and 179 to 180 (HR) contribute to the substrate site.

Belongs to the HAM1 NTPase family. In terms of assembly, homodimer. Mg(2+) serves as cofactor.

It catalyses the reaction XTP + H2O = XMP + diphosphate + H(+). The enzyme catalyses dITP + H2O = dIMP + diphosphate + H(+). It carries out the reaction ITP + H2O = IMP + diphosphate + H(+). Pyrophosphatase that catalyzes the hydrolysis of nucleoside triphosphates to their monophosphate derivatives, with a high preference for the non-canonical purine nucleotides XTP (xanthosine triphosphate), dITP (deoxyinosine triphosphate) and ITP. Seems to function as a house-cleaning enzyme that removes non-canonical purine nucleotides from the nucleotide pool, thus preventing their incorporation into DNA/RNA and avoiding chromosomal lesions. This Thermoanaerobacter pseudethanolicus (strain ATCC 33223 / 39E) (Clostridium thermohydrosulfuricum) protein is dITP/XTP pyrophosphatase.